Here is a 378-residue protein sequence, read N- to C-terminus: Alpha-D-ribose 1-methylphosphonate 5-triphosphate diphosphatase (378 aa).

The protein belongs to the metallo-dependent hydrolases superfamily.

It carries out the reaction alpha-D-ribose 1-methylphosphonate 5-triphosphate + H2O = alpha-D-ribose 1-methylphosphonate 5-phosphate + diphosphate + H(+). Functionally, catalyzes the hydrolysis of alpha-D-ribose 1-methylphosphonate triphosphate (RPnTP) to form alpha-D-ribose 1-methylphosphonate phosphate (PRPn) and diphosphate. The sequence is that of Alpha-D-ribose 1-methylphosphonate 5-triphosphate diphosphatase (phnM) from Escherichia coli (strain K12).